A 557-amino-acid polypeptide reads, in one-letter code: DNA ligase (557 aa).

Glu-249 contacts ATP. Residue Lys-251 is the N6-AMP-lysine intermediate of the active site. Residues Arg-256, Arg-271, Glu-301, Phe-340, Arg-417, and Lys-423 each contribute to the ATP site.

Belongs to the ATP-dependent DNA ligase family. Mg(2+) serves as cofactor.

The enzyme catalyses ATP + (deoxyribonucleotide)n-3'-hydroxyl + 5'-phospho-(deoxyribonucleotide)m = (deoxyribonucleotide)n+m + AMP + diphosphate.. Its function is as follows. DNA ligase that seals nicks in double-stranded DNA during DNA replication, DNA recombination and DNA repair. This Methanothermobacter thermautotrophicus (Methanobacterium thermoformicicum) protein is DNA ligase.